Here is a 343-residue protein sequence, read N- to C-terminus: UDP-3-O-acylglucosamine N-acyltransferase (343 aa).

The active-site Proton acceptor is the His239.

This sequence belongs to the transferase hexapeptide repeat family. LpxD subfamily. In terms of assembly, homotrimer.

It carries out the reaction a UDP-3-O-[(3R)-3-hydroxyacyl]-alpha-D-glucosamine + a (3R)-hydroxyacyl-[ACP] = a UDP-2-N,3-O-bis[(3R)-3-hydroxyacyl]-alpha-D-glucosamine + holo-[ACP] + H(+). Its pathway is bacterial outer membrane biogenesis; LPS lipid A biosynthesis. Functionally, catalyzes the N-acylation of UDP-3-O-acylglucosamine using 3-hydroxyacyl-ACP as the acyl donor. Is involved in the biosynthesis of lipid A, a phosphorylated glycolipid that anchors the lipopolysaccharide to the outer membrane of the cell. The polypeptide is UDP-3-O-acylglucosamine N-acyltransferase (Vibrio parahaemolyticus serotype O3:K6 (strain RIMD 2210633)).